We begin with the raw amino-acid sequence, 341 residues long: tRNA N6-adenosine threonylcarbamoyltransferase (341 aa).

H111 and H115 together coordinate Fe cation. Substrate contacts are provided by residues 134 to 138 (LVSGG), D167, G180, and N276. D304 serves as a coordination point for Fe cation.

Belongs to the KAE1 / TsaD family. Requires Fe(2+) as cofactor.

Its subcellular location is the cytoplasm. It catalyses the reaction L-threonylcarbamoyladenylate + adenosine(37) in tRNA = N(6)-L-threonylcarbamoyladenosine(37) in tRNA + AMP + H(+). Its function is as follows. Required for the formation of a threonylcarbamoyl group on adenosine at position 37 (t(6)A37) in tRNAs that read codons beginning with adenine. Is involved in the transfer of the threonylcarbamoyl moiety of threonylcarbamoyl-AMP (TC-AMP) to the N6 group of A37, together with TsaE and TsaB. TsaD likely plays a direct catalytic role in this reaction. The sequence is that of tRNA N6-adenosine threonylcarbamoyltransferase from Pseudomonas fluorescens (strain SBW25).